The primary structure comprises 459 residues: Trigger factor (459 aa).

The PPIase FKBP-type domain maps to 166 to 245; sequence GDFANIDLTA…VNSVKAEELP (80 aa).

It belongs to the FKBP-type PPIase family. Tig subfamily.

It is found in the cytoplasm. It carries out the reaction [protein]-peptidylproline (omega=180) = [protein]-peptidylproline (omega=0). Involved in protein export. Acts as a chaperone by maintaining the newly synthesized protein in an open conformation. Functions as a peptidyl-prolyl cis-trans isomerase. This Bifidobacterium longum (strain DJO10A) protein is Trigger factor.